Reading from the N-terminus, the 164-residue chain is Glutamate uptake regulatory protein (164 aa).

The 62-residue stretch at 5 to 66 folds into the HTH asnC-type domain; it reads LDDFDIKILD…LLDPQKIGLG (62 aa). The H-T-H motif DNA-binding region spans 24-43; it reads MAELSEKTGLSANACWRRIR.

In terms of biological role, represses the secondary, H(+)-coupled glutamate uptake system (Gluemp) genes. In Zymomonas mobilis subsp. mobilis (strain ATCC 31821 / ZM4 / CP4), this protein is Glutamate uptake regulatory protein (grp).